The primary structure comprises 83 residues: Small ribosomal subunit protein bS16 (83 aa).

This sequence belongs to the bacterial ribosomal protein bS16 family.

This is Small ribosomal subunit protein bS16 from Pseudomonas fluorescens (strain Pf0-1).